We begin with the raw amino-acid sequence, 71 residues long: MPSVRLKENEPFDVAIRRFKRTCEKAGVLSEVRRREFYEKPTAVRKRKAAAAVKRSMKKLARERARRTRLY.

The protein belongs to the bacterial ribosomal protein bS21 family.

The sequence is that of Small ribosomal subunit protein bS21 from Nitrosococcus oceani (strain ATCC 19707 / BCRC 17464 / JCM 30415 / NCIMB 11848 / C-107).